Here is a 211-residue protein sequence, read N- to C-terminus: Dephospho-CoA kinase (211 aa).

Residues 2-204 (IIGLTGSIGM…SGVRRWRRGK (203 aa)) form the DPCK domain. 10–15 (GMGKST) serves as a coordination point for ATP.

Belongs to the CoaE family.

The protein localises to the cytoplasm. The enzyme catalyses 3'-dephospho-CoA + ATP = ADP + CoA + H(+). It participates in cofactor biosynthesis; coenzyme A biosynthesis; CoA from (R)-pantothenate: step 5/5. In terms of biological role, catalyzes the phosphorylation of the 3'-hydroxyl group of dephosphocoenzyme A to form coenzyme A. The protein is Dephospho-CoA kinase of Rhodospirillum rubrum (strain ATCC 11170 / ATH 1.1.1 / DSM 467 / LMG 4362 / NCIMB 8255 / S1).